A 138-amino-acid chain; its full sequence is ATP synthase epsilon chain (138 aa).

Belongs to the ATPase epsilon chain family. In terms of assembly, F-type ATPases have 2 components, CF(1) - the catalytic core - and CF(0) - the membrane proton channel. CF(1) has five subunits: alpha(3), beta(3), gamma(1), delta(1), epsilon(1). CF(0) has three main subunits: a, b and c.

It localises to the cell inner membrane. In terms of biological role, produces ATP from ADP in the presence of a proton gradient across the membrane. The sequence is that of ATP synthase epsilon chain from Bartonella quintana (strain Toulouse) (Rochalimaea quintana).